The chain runs to 225 residues: Protein-L-isoaspartate O-methyltransferase (225 aa).

Ser75 is an active-site residue.

The protein belongs to the methyltransferase superfamily. L-isoaspartyl/D-aspartyl protein methyltransferase family.

It is found in the cytoplasm. The catalysed reaction is [protein]-L-isoaspartate + S-adenosyl-L-methionine = [protein]-L-isoaspartate alpha-methyl ester + S-adenosyl-L-homocysteine. Its function is as follows. Catalyzes the methyl esterification of L-isoaspartyl residues in peptides and proteins that result from spontaneous decomposition of normal L-aspartyl and L-asparaginyl residues. It plays a role in the repair and/or degradation of damaged proteins. This chain is Protein-L-isoaspartate O-methyltransferase, found in Stenotrophomonas maltophilia (strain K279a).